The following is a 122-amino-acid chain: Large ribosomal subunit protein uL14c (122 aa).

Belongs to the universal ribosomal protein uL14 family. Part of the 50S ribosomal subunit.

It is found in the plastid. The protein localises to the cyanelle. Functionally, binds to 23S rRNA. The sequence is that of Large ribosomal subunit protein uL14c from Cyanophora paradoxa.